The primary structure comprises 56 residues: Large ribosomal subunit protein bL33 (56 aa).

Belongs to the bacterial ribosomal protein bL33 family.

The sequence is that of Large ribosomal subunit protein bL33 from Marinomonas sp. (strain MWYL1).